We begin with the raw amino-acid sequence, 265 residues long: Small ribosomal subunit protein uS3 (265 aa).

Residues 39 to 107 form the KH type-2 domain; the sequence is VRDFLKKKLK…PVHVNIEEIR (69 aa). Positions 211 to 265 are disordered; that stretch reads NDAPVVEEPQDDRRRRPGRPEGRRREGEGRPGGNRRGGAGAGRRAAPGADAKSGE. Over residues 221-239 the composition is skewed to basic and acidic residues; that stretch reads DDRRRRPGRPEGRRREGEG. Over residues 240-251 the composition is skewed to gly residues; the sequence is RPGGNRRGGAGA.

This sequence belongs to the universal ribosomal protein uS3 family. As to quaternary structure, part of the 30S ribosomal subunit. Forms a tight complex with proteins S10 and S14.

Functionally, binds the lower part of the 30S subunit head. Binds mRNA in the 70S ribosome, positioning it for translation. In Cupriavidus necator (strain ATCC 17699 / DSM 428 / KCTC 22496 / NCIMB 10442 / H16 / Stanier 337) (Ralstonia eutropha), this protein is Small ribosomal subunit protein uS3.